Here is a 311-residue protein sequence, read N- to C-terminus: tRNA-cytidine(32) 2-sulfurtransferase (311 aa).

Residues 47 to 52 carry the PP-loop motif motif; that stretch reads SGGKDS. [4Fe-4S] cluster-binding residues include cysteine 122, cysteine 125, and cysteine 213.

Belongs to the TtcA family. As to quaternary structure, homodimer. Mg(2+) is required as a cofactor. [4Fe-4S] cluster serves as cofactor.

Its subcellular location is the cytoplasm. It catalyses the reaction cytidine(32) in tRNA + S-sulfanyl-L-cysteinyl-[cysteine desulfurase] + AH2 + ATP = 2-thiocytidine(32) in tRNA + L-cysteinyl-[cysteine desulfurase] + A + AMP + diphosphate + H(+). It functions in the pathway tRNA modification. Functionally, catalyzes the ATP-dependent 2-thiolation of cytidine in position 32 of tRNA, to form 2-thiocytidine (s(2)C32). The sulfur atoms are provided by the cysteine/cysteine desulfurase (IscS) system. The polypeptide is tRNA-cytidine(32) 2-sulfurtransferase (Escherichia coli (strain 55989 / EAEC)).